A 346-amino-acid chain; its full sequence is Methylthioribose-1-phosphate isomerase 1 (346 aa).

Residues Arg48–Ala50, Arg91, and Gln196 each bind substrate. Asp237 acts as the Proton donor in catalysis. Residue Asn247 to Lys248 participates in substrate binding.

This sequence belongs to the eIF-2B alpha/beta/delta subunits family. MtnA subfamily.

It catalyses the reaction 5-(methylsulfanyl)-alpha-D-ribose 1-phosphate = 5-(methylsulfanyl)-D-ribulose 1-phosphate. It participates in amino-acid biosynthesis; L-methionine biosynthesis via salvage pathway; L-methionine from S-methyl-5-thio-alpha-D-ribose 1-phosphate: step 1/6. In terms of biological role, catalyzes the interconversion of methylthioribose-1-phosphate (MTR-1-P) into methylthioribulose-1-phosphate (MTRu-1-P). This Pseudothermotoga lettingae (strain ATCC BAA-301 / DSM 14385 / NBRC 107922 / TMO) (Thermotoga lettingae) protein is Methylthioribose-1-phosphate isomerase 1.